Here is a 109-residue protein sequence, read N- to C-terminus: Spermidine export protein MdtI (109 aa).

At 1–5 (MAQFE) the chain is on the periplasmic side. The helical transmembrane segment at 6-26 (WVHAAWLALAIVLEIVANVFL) threads the bilayer. The Cytoplasmic segment spans residues 27 to 35 (KFSDGFRRK). Residues 36–56 (IFGLLSLAAVLAAFSALSQAV) traverse the membrane as a helical segment. The Periplasmic segment spans residues 57–63 (KGIDLSV). A helical membrane pass occupies residues 64 to 84 (VYALWGGFGIAATLAAGWILF). Topologically, residues 85 to 87 (GQR) are cytoplasmic. A helical membrane pass occupies residues 88 to 108 (LNRKGWIGLVLLLAGMIMVKL). Residue Ala109 is a topological domain, periplasmic.

It belongs to the drug/metabolite transporter (DMT) superfamily. Small multidrug resistance (SMR) (TC 2.A.7.1) family. MdtI subfamily. In terms of assembly, forms a complex with MdtJ.

It is found in the cell inner membrane. Its function is as follows. Catalyzes the excretion of spermidine. The polypeptide is Spermidine export protein MdtI (mdtI) (Shigella flexneri).